A 1697-amino-acid chain; its full sequence is Chromatin-remodeling ATPase INO80 (1697 aa).

Disordered stretches follow at residues 1–324 (MTGA…SDVE), 398–569 (QDEK…LSAY), and 615–637 (ASKQ…QARA). Polar residues-rich tracts occupy residues 33–53 (NNEQ…SRSP), 85–94 (QYQAHSSAGN), and 108–122 (LSGN…STPS). Basic and acidic residues predominate over residues 128–143 (GRPDSHPQTSPKKESE). The segment covering 202 to 221 (SSAEATPTPLAPAATAQTSL) has biased composition (low complexity). Residues 248-271 (RLEKKPTTEKRRRNPPETEQKTAD) show a composition bias toward basic and acidic residues. Over residues 272-288 (SRTSNVANGVSEPSKTL) the composition is skewed to polar residues. Positions 383–466 (ANEASVVAEV…TKRALEGITA (84 aa)) form a coiled coil. Basic and acidic residues-rich tracts occupy residues 414 to 451 (ENTV…ERAQ), 512 to 523 (SKEQKQAEKDAA), 540 to 560 (PKED…RSKE), and 621 to 635 (KWQE…DTQA). The 126-residue stretch at 581 to 706 (IWRDIARKDI…SHFIGRKIKG (126 aa)) folds into the DBINO domain. Residues 623–694 (QERTNKSMKD…KLNFLISQTE (72 aa)) are a coiled coil. The region spanning 835-1007 (VNLYEQGING…WALLHFIMPT (173 aa)) is the Helicase ATP-binding domain. ATP is bound at residue 848 to 855 (DEMGLGKT). The DEAQ box signature appears at 958 to 961 (DEAQ). The Helicase C-terminal domain occupies 1410–1570 (KLDELLRELK…GVDFNTRNRE (161 aa)). Residues 1626 to 1697 (YHEGEGNFDD…IDGDGGLGPS (72 aa)) form a disordered region. Residues 1646–1658 (PVSTAENVGTPSS) show a composition bias toward polar residues. Over residues 1663–1679 (KRGRGRGSGKGTSKRAK) the composition is skewed to basic residues. Positions 1680–1689 (TTKERLRLID) are enriched in basic and acidic residues.

It belongs to the SNF2/RAD54 helicase family. As to quaternary structure, component of the INO80 chromatin-remodeling complex.

Its subcellular location is the nucleus. The enzyme catalyses ATP + H2O = ADP + phosphate + H(+). Functionally, ATPase component of the INO80 complex which remodels chromatin by shifting nucleosomes and is involved in DNA repair. This Aspergillus niger (strain ATCC MYA-4892 / CBS 513.88 / FGSC A1513) protein is Chromatin-remodeling ATPase INO80 (ino80).